Consider the following 248-residue polypeptide: Aquaporin TIP2-3 (248 aa).

Transmembrane regions (helical) follow at residues 20–40 (AYVAEFIATLLFVFAGVGSAI) and 54–74 (AGLVAIAIAHAFALFVGVSMA). The NPA 1 signature appears at 83 to 85 (NPA). 3 helical membrane passes run 97-119 (TILTGILYWVAQLLGASVACFLL), 141-161 (GVVMEIVITFALVYTVYATAA), and 168-188 (LGTIAPMAIGFIVGANILAAG). The NPA 2 motif lies at 196 to 198 (NPA). A helical transmembrane segment spans residues 217-237 (WVGPLVGGGLAGLVYGDVFIA).

The protein belongs to the MIP/aquaporin (TC 1.A.8) family. TIP (TC 1.A.8.10) subfamily. Specifically expressed in roots.

It localises to the cell membrane. Functionally, water channel required to facilitate the transport of water across cell membrane. The sequence is that of Aquaporin TIP2-3 (TIP2-3) from Zea mays (Maize).